Consider the following 224-residue polypeptide: Large ribosomal subunit protein bL25 (224 aa).

Belongs to the bacterial ribosomal protein bL25 family. CTC subfamily. Part of the 50S ribosomal subunit; part of the 5S rRNA/L5/L18/L25 subcomplex. Contacts the 5S rRNA. Binds to the 5S rRNA independently of L5 and L18.

In terms of biological role, this is one of the proteins that binds to the 5S RNA in the ribosome where it forms part of the central protuberance. The sequence is that of Large ribosomal subunit protein bL25 from Psychrobacter arcticus (strain DSM 17307 / VKM B-2377 / 273-4).